The primary structure comprises 252 residues: 3-dehydroquinate dehydratase (252 aa).

Residues 46-48 and Arg82 each bind 3-dehydroquinate; that span reads EWR. The Proton donor/acceptor role is filled by His143. Lys170 functions as the Schiff-base intermediate with substrate in the catalytic mechanism. Positions 212, 231, and 235 each coordinate 3-dehydroquinate.

The protein belongs to the type-I 3-dehydroquinase family. Homodimer.

The enzyme catalyses 3-dehydroquinate = 3-dehydroshikimate + H2O. The protein operates within metabolic intermediate biosynthesis; chorismate biosynthesis; chorismate from D-erythrose 4-phosphate and phosphoenolpyruvate: step 3/7. Functionally, involved in the third step of the chorismate pathway, which leads to the biosynthesis of aromatic amino acids. Catalyzes the cis-dehydration of 3-dehydroquinate (DHQ) and introduces the first double bond of the aromatic ring to yield 3-dehydroshikimate. This is 3-dehydroquinate dehydratase from Listeria monocytogenes serotype 4a (strain HCC23).